The following is an 828-amino-acid chain: Periplasmic nitrate reductase (828 aa).

Residues Met1–Ala31 constitute a signal peptide (tat-type signal). In terms of domain architecture, 4Fe-4S Mo/W bis-MGD-type spans Ile39–Asp95. Positions 46, 49, 53, and 81 each coordinate [4Fe-4S] cluster. Mo-bis(molybdopterin guanine dinucleotide)-binding positions include Lys83, Gln150, Asn175, Cys179, Trp212–Met219, Ser243–His247, Gln262–Asp264, Met372, Gln376, Asn482, Ser508–Asp509, Lys531, Asp558, and Thr718–Thr727. A substrate-binding site is contributed by Phe794. The Mo-bis(molybdopterin guanine dinucleotide) site is built by Asn802 and Lys819.

Belongs to the prokaryotic molybdopterin-containing oxidoreductase family. NasA/NapA/NarB subfamily. In terms of assembly, component of the periplasmic nitrate reductase NapAB complex composed of NapA and NapB. [4Fe-4S] cluster serves as cofactor. Mo-bis(molybdopterin guanine dinucleotide) is required as a cofactor. In terms of processing, predicted to be exported by the Tat system. The position of the signal peptide cleavage has not been experimentally proven.

The protein localises to the periplasm. The enzyme catalyses 2 Fe(II)-[cytochrome] + nitrate + 2 H(+) = 2 Fe(III)-[cytochrome] + nitrite + H2O. Catalytic subunit of the periplasmic nitrate reductase complex NapAB. Receives electrons from NapB and catalyzes the reduction of nitrate to nitrite. This Shigella flexneri protein is Periplasmic nitrate reductase.